We begin with the raw amino-acid sequence, 1036 residues long: Potassium-transporting ATPase alpha chain 2 (1036 aa).

Residues 1-50 (MRRKTEIYSVELNGTKDVKPADQRDDKKFKGAKNKDLEPNKSHEKEELKK) are disordered. Topologically, residues 1–99 (MRRKTEIYSV…PNTLTPPKQT (99 aa)) are cytoplasmic. Basic and acidic residues predominate over residues 14–50 (GTKDVKPADQRDDKKFKGAKNKDLEPNKSHEKEELKK). The helical transmembrane segment at 100-120 (PEIIKFLKQMVGGFSILLWIG) threads the bilayer. The Lumenal portion of the chain corresponds to 121–143 (AALCWIAFVIQYVNNSASLDNVY). Residues 144 to 164 (LGAILVLVVILTGIFAYYQEA) traverse the membrane as a helical segment. The Cytoplasmic segment spans residues 165-300 (KSTNIMASFS…SEKTPIAIEI (136 aa)). Residues 301–320 (EHFVHIVAGVAVSIDIIFFI) form a helical membrane-spanning segment. Residues 321–332 (TAVCMKYYVLDA) are Lumenal-facing. Residues 333-350 (IIFLISIIVANVPEGLLA) form a helical membrane-spanning segment. The Cytoplasmic portion of the chain corresponds to 351 to 784 (TVTVTLSLTA…EEGRLIFDNL (434 aa)). Asp388 functions as the 4-aspartylphosphate intermediate in the catalytic mechanism. 2 residues coordinate Mg(2+): Asp729 and Asp733. The helical transmembrane segment at 785-804 (KKTIAYTLTKNIAELCPFLI) threads the bilayer. Residues 805 to 814 (YIVAGLPLPI) are Lumenal-facing. The helical transmembrane segment at 815-835 (GTITILFIDLGTDIIPSIALA) threads the bilayer. The Cytoplasmic portion of the chain corresponds to 836–855 (YEKAESDIMNRKPRHKKKDR). A helical transmembrane segment spans residues 856–878 (LVNTQLAIYSYLHIGLMQALGGF). The Lumenal segment spans residues 879-930 (LVYFTVYAQQGFWPTSLINLRVAWETDDINDLEDSYGQEWTRYQRKYLEWTG). The helical transmembrane segment at 931-950 (STAFFVAIMIQQIADLIIRK) threads the bilayer. Residues 951 to 964 (TRRNSIFQQGLFRN) are Cytoplasmic-facing. Ser955 bears the Phosphoserine; by PKA mark. A helical membrane pass occupies residues 965 to 983 (KVIWVGIASQVIVALILSY). The Lumenal segment spans residues 984-998 (GLGSVPALSFTMLRV). Residues 999–1019 (QYWFVAVPHAILIWVYDEMRK) form a helical membrane-spanning segment. At 1020 to 1036 (LFIRLYPGSWWDKNMYY) the chain is on the cytoplasmic side.

Belongs to the cation transport ATPase (P-type) (TC 3.A.3) family. Type IIC subfamily. The ATPase pump is composed of a catalytic alpha subunit and an auxiliary non-catalytic beta subunit. The alpha subunit pairs with the beta subunit of gastric H(+)/K(+) ATPase ATP4B or the beta subunit of Na(+)/K(+) ATPases ATP1B1 and ATP1B3; this interaction is required for the formation of a functionally active pump and its targeting at the plasma membrane. As to expression, expressed at high levels in distal colon, coagulating and preputial glands; at much lower levels in proximal colon, kidney, uterus, brain, placenta and lung; and at trace levels in heart and forestomach. Expressed in distal colon epithelium (at protein level). Expressed in anterior prostate (at protein level).

It localises to the apical cell membrane. It catalyses the reaction K(+)(out) + ATP + H2O + H(+)(in) = K(+)(in) + ADP + phosphate + 2 H(+)(out). The catalysed reaction is K(+)(out) + Na(+)(in) + ATP + H2O = K(+)(in) + Na(+)(out) + ADP + phosphate + H(+). Up-regulated by K(+) ions in a dose-dependent way. Functionally, the catalytic subunit of a H(+)/K(+) ATPase and/or Na(+)/K(+) ATPase pump which transports K(+) ions in exchange for Na(+) and/or H(+) ions across the apical membrane of epithelial cells. Uses ATP as an energy source to pump K(+) ions into the cell while transporting Na(+) and/or H(+) ions to the extracellular compartment. Involved in the maintenance of electrolyte homeostasis through K(+) ion absorption in kidney and colon. In the airway epithelium, may play a primary role in mucus acidification regulating its viscosity and clearance. In Rattus norvegicus (Rat), this protein is Potassium-transporting ATPase alpha chain 2 (Atp12a).